A 108-amino-acid chain; its full sequence is UPF0102 protein Shewana3_3881 (108 aa).

This sequence belongs to the UPF0102 family.

This Shewanella sp. (strain ANA-3) protein is UPF0102 protein Shewana3_3881.